Consider the following 211-residue polypeptide: Probable metallo-hydrolase YqgX (211 aa).

Residues His54, His56, Asp58, His59, His130, Asp149, and His190 each contribute to the Zn(2+) site.

This sequence belongs to the metallo-beta-lactamase superfamily. Glyoxalase II family. It depends on Zn(2+) as a cofactor.

The protein is Probable metallo-hydrolase YqgX (yqgX) of Bacillus subtilis (strain 168).